Reading from the N-terminus, the 690-residue chain is Calpain-9 (690 aa).

The tract at residues 1–24 (MPYLHRSLRPQPQPVPRDARTVHS) is disordered. A Calpain catalytic domain is found at 42-337 (LFEDADFPAS…FDKVEICNLT (296 aa)). Ca(2+) contacts are provided by L81, G83, and D88. C97 is an active-site residue. E167 lines the Ca(2+) pocket. Active-site residues include H254 and N278. Ca(2+)-binding residues include E284, D291, L312, D314, and E316. The tract at residues 338 to 521 (PDALEDNTLH…PQEEETEEER (184 aa)) is domain III. Residues 522-690 (QFRALFRRIA…NEFINLTMNI (169 aa)) are domain IV. EF-hand domains lie at 534-552 (DMEV…VLQK), 561-589 (LSLL…FRVF), and 591-626 (DKLR…AGFQ). Residues D574, S576, N578, K580, E585, D604, D606, S608, T610, and E615 each coordinate Ca(2+).

It belongs to the peptidase C2 family. In terms of tissue distribution, predominantly expressed in stomach and small intestine, although low levels of expression in other organs.

Functionally, calcium-regulated non-lysosomal thiol-protease. In Rattus norvegicus (Rat), this protein is Calpain-9 (Capn9).